We begin with the raw amino-acid sequence, 294 residues long: NAD kinase (294 aa).

Asp-73 (proton acceptor) is an active-site residue. Residues 73–74 (DG), 147–148 (NE), His-158, Arg-175, Asp-177, and 188–193 (TAYALS) contribute to the NAD(+) site.

It belongs to the NAD kinase family. Requires a divalent metal cation as cofactor.

Its subcellular location is the cytoplasm. It carries out the reaction NAD(+) + ATP = ADP + NADP(+) + H(+). Its function is as follows. Involved in the regulation of the intracellular balance of NAD and NADP, and is a key enzyme in the biosynthesis of NADP. Catalyzes specifically the phosphorylation on 2'-hydroxyl of the adenosine moiety of NAD to yield NADP. The protein is NAD kinase of Tolumonas auensis (strain DSM 9187 / NBRC 110442 / TA 4).